A 40-amino-acid polypeptide reads, in one-letter code: Photosystem II reaction center protein J (40 aa).

A helical transmembrane segment spans residues 8–28 (IPLWVIGTVAGIPVIGLIGIF).

It belongs to the PsbJ family. PSII is composed of 1 copy each of membrane proteins PsbA, PsbB, PsbC, PsbD, PsbE, PsbF, PsbH, PsbI, PsbJ, PsbK, PsbL, PsbM, PsbT, PsbX, PsbY, PsbZ, Psb30/Ycf12, at least 3 peripheral proteins of the oxygen-evolving complex and a large number of cofactors. It forms dimeric complexes.

Its subcellular location is the plastid. The protein resides in the chloroplast thylakoid membrane. One of the components of the core complex of photosystem II (PSII). PSII is a light-driven water:plastoquinone oxidoreductase that uses light energy to abstract electrons from H(2)O, generating O(2) and a proton gradient subsequently used for ATP formation. It consists of a core antenna complex that captures photons, and an electron transfer chain that converts photonic excitation into a charge separation. This Nasturtium officinale (Watercress) protein is Photosystem II reaction center protein J.